Reading from the N-terminus, the 1007-residue chain is Serine/threonine-protein kinase PRP4 homolog (1007 aa).

The tract at residues 1-102 (MAATEPPSLR…LSPAKRTKLD (102 aa)) is disordered. Ala-2 carries the N-acetylalanine modification. 4 positions are modified to phosphoserine: Ser-8, Ser-21, Ser-24, and Ser-33. Composition is skewed to basic residues over residues 40 to 60 (KHSR…KHKH) and 68 to 82 (KKHK…HKRK). Basic and acidic residues predominate over residues 83–92 (EVIEASDKEG). Residues Ser-88 and Ser-94 each carry the phosphoserine modification. An N6-acetyllysine; alternate modification is found at Lys-100. A Glycyl lysine isopeptide (Lys-Gly) (interchain with G-Cter in SUMO2); alternate cross-link involves residue Lys-100. A Glycyl lysine isopeptide (Lys-Gly) (interchain with G-Cter in SUMO2) cross-link involves residue Lys-112. Residue Lys-118 forms a Glycyl lysine isopeptide (Lys-Gly) (interchain with G-Cter in SUMO2); alternate linkage. Residue Lys-118 forms a Glycyl lysine isopeptide (Lys-Gly) (interchain with G-Cter in SUMO1); alternate linkage. A Phosphoserine modification is found at Ser-132. Tyr-141 carries the phosphotyrosine modification. 2 disordered regions span residues 141–535 (YESG…EDEE) and 560–583 (NISV…SPDD). A phosphoserine mark is found at Ser-143, Ser-145, and Ser-167. Positions 158 to 169 (GNRSSTRSSSTR) are enriched in low complexity. Residues Lys-171 and Lys-178 each participate in a glycyl lysine isopeptide (Lys-Gly) (interchain with G-Cter in SUMO2) cross-link. 2 stretches are compositionally biased toward basic residues: residues 180–203 (SAKK…RKSK) and 215–231 (RSKS…SKRS). 6 positions are modified to phosphoserine: Ser-240, Ser-242, Ser-258, Ser-278, Ser-292, and Ser-294. Residues 248 to 271 (RSQEKVGKARSPAEEKMKSEEKGK) are compositionally biased toward basic and acidic residues. Positions 294–303 (SPVDLRDKSK) are enriched in basic and acidic residues. Positions 304 to 315 (DRRSRSKERKSK) are enriched in basic residues. The span at 316-325 (RSEIDKEKKP) shows a compositional bias: basic and acidic residues. Phosphoserine occurs at positions 328, 354, 356, 366, and 368. Positions 342 to 367 (PSRRPGRSPKRRSLSPKLRDKSRRSR) are enriched in basic residues. The residue at position 385 (Thr-385) is a Phosphothreonine. Position 387 is a phosphoserine (Ser-387). 2 stretches are compositionally biased toward basic and acidic residues: residues 395-408 (RSLE…ERRR) and 415-429 (RPRD…RSKD). Ser-427, Ser-431, and Ser-437 each carry phosphoserine. Residues 438–497 (PTRRRSRSPIRRRSRSPLRRSRSPRRRSRSPRRRDRSRRSRSRLRRRSRSRGGHRRRSRS) are compositionally biased toward basic residues. A phosphoserine mark is found at Ser-518, Ser-519, Ser-520, Ser-565, Ser-569, Ser-576, Ser-578, and Ser-580. Residues 518–535 (SSSDDNLEDFDVEEEDEE) show a composition bias toward acidic residues. The span at 562–581 (SVPSEPSSPQSSTRSRSPSP) shows a compositional bias: low complexity. Glycyl lysine isopeptide (Lys-Gly) (interchain with G-Cter in SUMO2) cross-links involve residues Lys-593 and Lys-659. The region spanning 687–1006 (YNVYGYTGQG…ALQHAFIQEK (320 aa)) is the Protein kinase domain. ATP-binding positions include 693 to 701 (TGQGVFSNV) and Lys-717. N6-acetyllysine is present on Lys-717. Catalysis depends on Asp-815, which acts as the Proton acceptor. Tyr-849 is modified (phosphotyrosine). Residue Ser-852 is modified to Phosphoserine.

The protein belongs to the protein kinase superfamily. CMGC Ser/Thr protein kinase family. As to quaternary structure, interacts with CLK1 C-terminus. Associates with the U5 snRNP and NCOR1 deacetylase complexes. Identified in the spliceosome C complex. Phosphorylated by CLK1. Autophosphorylated; phosphorylation inhibits interaction with its targets, such as PRPF6 or SMARCA4.

It localises to the nucleus. The protein resides in the chromosome. The protein localises to the centromere. Its subcellular location is the kinetochore. It carries out the reaction L-seryl-[protein] + ATP = O-phospho-L-seryl-[protein] + ADP + H(+). The enzyme catalyses L-threonyl-[protein] + ATP = O-phospho-L-threonyl-[protein] + ADP + H(+). Serine/threonine kinase involved in spliceosomal assembly as well as mitosis and signaling regulation. Connects chromatin mediated regulation of transcription and pre-mRNA splicing. During spliceosomal assembly, interacts with and phosphorylates PRPF6 and PRPF31, components of the U4/U6-U5 tri-small nuclear ribonucleoprotein (snRNP), to facilitate the formation of the spliceosome B complex. Plays a role in regulating transcription and the spindle assembly checkpoint (SAC). Associates with U5 snRNP and NCOR1 deacetylase complexes which may allow a coordination of pre-mRNA splicing with chromatin remodeling events involved in transcriptional regulation. Associates and probably phosphorylates SMARCA4 and NCOR1. Phosphorylates SRSF1. Associates with kinetochores during mitosis and is necessary for recruitment and maintenance of the checkpoint proteins such as MAD1L1 and MAD12L1 at the kinetochores. Phosphorylates and regulates the activity of the transcription factors such as ELK1 and KLF13. Phosphorylates nuclear YAP1 and WWTR1/TAZ which induces nuclear exclusion and regulates Hippo signaling pathway, involved in tissue growth control. In Mus musculus (Mouse), this protein is Serine/threonine-protein kinase PRP4 homolog (Prp4k).